The sequence spans 182 residues: Ribosome maturation factor RimM (182 aa).

The PRC barrel domain maps to 106 to 179 (EGEFHVLDLI…RIEITPPPGL (74 aa)).

It belongs to the RimM family. In terms of assembly, binds ribosomal protein uS19.

The protein resides in the cytoplasm. An accessory protein needed during the final step in the assembly of 30S ribosomal subunit, possibly for assembly of the head region. Essential for efficient processing of 16S rRNA. May be needed both before and after RbfA during the maturation of 16S rRNA. It has affinity for free ribosomal 30S subunits but not for 70S ribosomes. This Synechococcus elongatus (strain ATCC 33912 / PCC 7942 / FACHB-805) (Anacystis nidulans R2) protein is Ribosome maturation factor RimM.